Reading from the N-terminus, the 441-residue chain is Ribulose bisphosphate carboxylase large chain (441 aa).

Substrate contacts are provided by asparagine 89 and threonine 139. Lysine 141 serves as the catalytic Proton acceptor. Lysine 143 serves as a coordination point for substrate. Mg(2+) contacts are provided by lysine 167, aspartate 169, and glutamate 170. Lysine 167 carries the post-translational modification N6-carboxylysine. Catalysis depends on histidine 260, which acts as the Proton acceptor. Substrate-binding residues include arginine 261, histidine 293, and serine 345.

Belongs to the RuBisCO large chain family. Type I subfamily. In terms of assembly, heterohexadecamer of 8 large chains and 8 small chains; disulfide-linked. The disulfide link is formed within the large subunit homodimers. Mg(2+) serves as cofactor. Post-translationally, the disulfide bond which can form in the large chain dimeric partners within the hexadecamer appears to be associated with oxidative stress and protein turnover.

It is found in the plastid. Its subcellular location is the chloroplast. It carries out the reaction 2 (2R)-3-phosphoglycerate + 2 H(+) = D-ribulose 1,5-bisphosphate + CO2 + H2O. It catalyses the reaction D-ribulose 1,5-bisphosphate + O2 = 2-phosphoglycolate + (2R)-3-phosphoglycerate + 2 H(+). RuBisCO catalyzes two reactions: the carboxylation of D-ribulose 1,5-bisphosphate, the primary event in carbon dioxide fixation, as well as the oxidative fragmentation of the pentose substrate in the photorespiration process. Both reactions occur simultaneously and in competition at the same active site. The sequence is that of Ribulose bisphosphate carboxylase large chain from Fouquieria splendens (Ocotillo).